The primary structure comprises 179 residues: Large ribosomal subunit protein uL5 (179 aa).

This sequence belongs to the universal ribosomal protein uL5 family. Part of the 50S ribosomal subunit; part of the 5S rRNA/L5/L18/L25 subcomplex. Contacts the 5S rRNA and the P site tRNA. Forms a bridge to the 30S subunit in the 70S ribosome.

In terms of biological role, this is one of the proteins that bind and probably mediate the attachment of the 5S RNA into the large ribosomal subunit, where it forms part of the central protuberance. In the 70S ribosome it contacts protein S13 of the 30S subunit (bridge B1b), connecting the 2 subunits; this bridge is implicated in subunit movement. Contacts the P site tRNA; the 5S rRNA and some of its associated proteins might help stabilize positioning of ribosome-bound tRNAs. This Nitrosomonas europaea (strain ATCC 19718 / CIP 103999 / KCTC 2705 / NBRC 14298) protein is Large ribosomal subunit protein uL5.